The sequence spans 229 residues: Protein AF_2251 (229 aa).

It belongs to the CinA family.

The polypeptide is Protein AF_2251 (Archaeoglobus fulgidus (strain ATCC 49558 / DSM 4304 / JCM 9628 / NBRC 100126 / VC-16)).